The following is a 334-amino-acid chain: tRNA uridine(34) hydroxylase (334 aa).

Positions 123–217 (SDPDVILVDT…YLEEVKAEES (95 aa)) constitute a Rhodanese domain. Residue Cys177 is the Cysteine persulfide intermediate of the active site.

The protein belongs to the TrhO family.

The catalysed reaction is uridine(34) in tRNA + AH2 + O2 = 5-hydroxyuridine(34) in tRNA + A + H2O. Catalyzes oxygen-dependent 5-hydroxyuridine (ho5U) modification at position 34 in tRNAs. This chain is tRNA uridine(34) hydroxylase, found in Shewanella baltica (strain OS185).